The sequence spans 1228 residues: MSILSENNPTQTSITDPNESSHLHNPELNSGTRVASGPGPGPEVESTPLAPPTEVMNTTSANTSSLSLGSPMHEKIKQFDQDEVDTGETNDRTIESGSSDIDDSQQSHNNNNNNNNNESNPESSEADDEKTQGMPPRMPGTFNVKGLHQGDDSDNEKQYTELTKSINKRTSKDSYSPGTLESPGTLNALETNNVSPAVIEEEQHTSSLEDLSLSLQHQNENARLSAPRSAPPQVSTSKTSSFHDMSSVISSSTSVHKIPSNPTSTRGSHLSSYKSTLDPGKPAQAAAPPPPEIDIDNLLTKSELDSETDTLSSATNSPNLLRNDTLQGIPTRDDENIDDSPRQLSQNTSATSRNTSGTSTSTVVKNSRSGTSKLTSTSTAHNQTAAITPIIPSHNKFHQQVINTNSTNSSSSLEPLGVGINSNSSPKNGKKRKSGSKVRGVFSSMFGKNKSTSSSSSSNSGSNSHSQEVNIKISTPFNAKHLAHVGIDDNGSYTGLPIEWERLLSASGITKKEQQQHPQAVMDIVAFYQDTSENPDDAAFKKFHFDNNKSSSSGWSNENTPPATPGGSNSGSGGGGGGAPSSPHRTPPSSIIEKNNVEQKVITPSQSMPTKTESKQSENQHPHEDNATQYTPRTPTSHVQEGQFIPSRPAPKPPSTPLSSMSVSHKTPSSQSLPRSDSQSDIRSSTPKSHQDISPSKIKIRSISSKSLKSMRSRKSGDKFTHIAPAPPPPSLPSIPKSKSHSASLSSQLRPATNGSTTAPIPASAAFGGENNALPRQRINEFKAHRAPPPPPSASPAPPVPPAPPANLLSEQTSEIPQQRTAPSQALADVTAPTNIYEIQQTKYQEAQQKLREKKARELEEIQRLREKNERQNRQQETGQNNADTASGGSNIAPPVPVPNKKPPSGSGGGRDAKQAALIAQKKREEKKRKNLQIIAKLKTICNPGDPNELYVDLVKIGQGASGGVFLAHDVRDKSNIVAIKQMNLEQQPKKELIINEILVMKGSSHPNIVNFIDSYLLKGDLWVIMEYMEGGSLTDIVTHSVMTEGQIGVVCRETLKGLKFLHSKGVIHRDIKSDNILLNMDGNIKITDFGFCAQINEINSKRITMVGTPYWMAPEIVSRKEYGPKVDVWSLGIMIIEMLEGEPPYLNETPLRALYLIATNGTPKLKDPESLSYDIRKFLAWCLQVDFNKRADADELLHDNFITECDDVSSLSPLVKIARLKKMSESD.

Over residues 1–18 (MSILSENNPTQTSITDPN) the composition is skewed to polar residues. Disordered stretches follow at residues 1–382 (MSIL…TAHN) and 405–468 (NSTN…HSQE). 2 stretches are compositionally biased toward low complexity: residues 57–70 (NTTS…SLGS) and 95–123 (ESGS…NPES). Basic and acidic residues predominate over residues 148–159 (HQGDDSDNEKQY). Polar residues-rich tracts occupy residues 173–195 (DSYS…NNVS), 205–222 (TSSL…NENA), and 232–244 (PQVS…SFHD). Residues 246 to 255 (SSVISSSTSV) are compositionally biased toward low complexity. 2 stretches are compositionally biased toward polar residues: residues 260 to 275 (SNPT…SYKS) and 309 to 328 (DTLS…TLQG). Positions 347-367 (NTSATSRNTSGTSTSTVVKNS) are enriched in low complexity. Over residues 368-382 (RSGTSKLTSTSTAHN) the composition is skewed to polar residues. Over residues 437-466 (KVRGVFSSMFGKNKSTSSSSSSNSGSNSHS) the composition is skewed to low complexity. In terms of domain architecture, CRIB spans 473 to 486 (ISTPFNAKHLAHVG). Disordered stretches follow at residues 543–829 (FHFD…ALAD) and 865–917 (LREK…KQAA). The span at 548–559 (NKSSSSGWSNEN) shows a compositional bias: polar residues. A compositionally biased stretch (gly residues) spans 568–579 (SNSGSGGGGGGA). The segment covering 602-611 (ITPSQSMPTK) has biased composition (polar residues). Over residues 612-626 (TESKQSENQHPHEDN) the composition is skewed to basic and acidic residues. A compositionally biased stretch (polar residues) spans 627–640 (ATQYTPRTPTSHVQ). Composition is skewed to low complexity over residues 668 to 681 (PSSQ…SQSD), 693 to 708 (ISPS…SKSL), and 734 to 747 (SIPK…SLSS). The segment covering 748 to 759 (QLRPATNGSTTA) has biased composition (polar residues). Over residues 787 to 805 (APPPPPSASPAPPVPPAPP) the composition is skewed to pro residues. The segment covering 809–824 (LSEQTSEIPQQRTAPS) has biased composition (polar residues). Residues 865 to 874 (LREKNERQNR) show a composition bias toward basic and acidic residues. Polar residues predominate over residues 875–890 (QQETGQNNADTASGGS). The region spanning 951 to 1203 (YVDLVKIGQG…ADELLHDNFI (253 aa)) is the Protein kinase domain. ATP contacts are provided by residues 957–965 (IGQGASGGV) and Lys981. The active-site Proton acceptor is the Asp1071.

The protein belongs to the protein kinase superfamily. STE Ser/Thr protein kinase family. STE20 subfamily.

The protein resides in the cytoplasm. The protein localises to the nucleus. It catalyses the reaction L-seryl-[protein] + ATP = O-phospho-L-seryl-[protein] + ADP + H(+). The catalysed reaction is L-threonyl-[protein] + ATP = O-phospho-L-threonyl-[protein] + ADP + H(+). Functionally, MAP4K component of the MAPK pathway required for the mating pheromone response, and the regulation of cell polarity and cell cycle. Phosphorylates histone H2B to form H2BS10ph. Required for hyphal formation and virulence. This chain is Serine/threonine-protein kinase CST20 (CST20), found in Candida albicans (strain SC5314 / ATCC MYA-2876) (Yeast).